The sequence spans 76 residues: Large ribosomal subunit protein eL29 (76 aa).

Positions Met-1 to His-29 are enriched in basic residues. 2 disordered regions span residues Met-1–Leu-33 and Arg-47–Leu-76. At Ser-31 the chain carries Phosphoserine. The span at Leu-51–Glu-62 shows a compositional bias: basic and acidic residues.

The protein belongs to the eukaryotic ribosomal protein eL29 family.

In Drosophila melanogaster (Fruit fly), this protein is Large ribosomal subunit protein eL29 (RpL29).